Reading from the N-terminus, the 48-residue chain is Small polypeptide DEVIL 19 (48 aa).

The interval 13–44 (AFTSKCVSLVKEQRARLYILRRCATMLCCWYI) is required for DVL/RTFL small polypeptide activity. The helical transmembrane segment at 25–42 (QRARLYILRRCATMLCCW) threads the bilayer.

This sequence belongs to the DVL/RTFL small polypeptides family.

The protein resides in the cell membrane. Small polypeptide acting as a regulatory molecule which coordinates cellular responses required for differentiation, growth and development, probably by restricting polar cell proliferation in lateral organs and coordinating socket cell recruitment and differentiation at trichome sites. The protein is Small polypeptide DEVIL 19 of Arabidopsis thaliana (Mouse-ear cress).